The following is a 369-amino-acid chain: Methionine import ATP-binding protein MetN 1 (369 aa).

Residues 1–26 (MTTMTVPPSLLPLEPFPTAPDTRAST) are disordered. The ABC transporter domain occupies 29 to 265 (IRLHGLGKRY…PRHAVTRSLL (237 aa)). 62–69 (GRSGAGKS) is an ATP binding site.

Belongs to the ABC transporter superfamily. Methionine importer (TC 3.A.1.24) family. The complex is composed of two ATP-binding proteins (MetN), two transmembrane proteins (MetI) and a solute-binding protein (MetQ).

Its subcellular location is the cell inner membrane. It catalyses the reaction L-methionine(out) + ATP + H2O = L-methionine(in) + ADP + phosphate + H(+). The enzyme catalyses D-methionine(out) + ATP + H2O = D-methionine(in) + ADP + phosphate + H(+). Functionally, part of the ABC transporter complex MetNIQ involved in methionine import. Responsible for energy coupling to the transport system. The protein is Methionine import ATP-binding protein MetN 1 of Pseudomonas aeruginosa (strain UCBPP-PA14).